The chain runs to 366 residues: Mitochondrial substrate carrier family protein H (366 aa).

Residues M1–S25 are compositionally biased toward low complexity. Residues M1–N26 are disordered. 3 Solcar repeats span residues K29–Y121, N132–K243, and S259–S360. 6 helical membrane-spanning segments follow: residues M35–V55, G96–F112, I133–V151, V175–S192, F262–I282, and V340–I357.

Belongs to the mitochondrial carrier (TC 2.A.29) family.

The protein localises to the mitochondrion inner membrane. Its function is as follows. Mitochondrial transporter required for glutathione import into mitochondria. The chain is Mitochondrial substrate carrier family protein H from Dictyostelium discoideum (Social amoeba).